A 512-amino-acid polypeptide reads, in one-letter code: Multidrug export protein EmrB (512 aa).

At 1-12 (MQQQKPLEGAQL) the chain is on the cytoplasmic side. The helical transmembrane segment at 13–38 (VIMTIALSLATFMQVLDSTIANVAIP) threads the bilayer. The Extracellular portion of the chain corresponds to 39-51 (TIAGNLGSSLSQG). The helical transmembrane segment at 52–72 (TWVITSFGVANAISIPLTGWL) threads the bilayer. The Cytoplasmic portion of the chain corresponds to 73-81 (AKRVGEVKL). The helical transmembrane segment at 82–100 (FLWSTIAFAIASWACGVSS) threads the bilayer. The Extracellular portion of the chain corresponds to 101–109 (SLNMLIFFR). The chain crosses the membrane as a helical span at residues 110-128 (VIQGIVAGPLIPLSQSLLL). The Cytoplasmic segment spans residues 129-136 (NNYPPAKR). The chain crosses the membrane as a helical span at residues 137–159 (SIALALWSMTVIVAPICGPILGG). Residues 160–164 (YISDN) lie on the Extracellular side of the membrane. Residues 165–189 (YHWGWIFFINVPIGVAVVLMTLQTL) form a helical membrane-spanning segment. Over 190-202 (RGRETRTERRRID) the chain is Cytoplasmic. The chain crosses the membrane as a helical span at residues 203–223 (AVGLALLVIGIGSLQIMLDRG). Residues 224–233 (KELDWFSSQE) lie on the Extracellular side of the membrane. The helical transmembrane segment at 234–249 (IIILTVVAVVAICFLI) threads the bilayer. Topologically, residues 250 to 271 (VWELTDDNPIVDLSLFKSRNFT) are cytoplasmic. Residues 272–295 (IGCLCISLAYMLYFGAIVLLPQLL) form a helical membrane-spanning segment. The Extracellular segment spans residues 296 to 305 (QEVYGYTATW). Residues 306–329 (AGLASAPVGIIPVILSPIIGRFAH) traverse the membrane as a helical segment. At 330–335 (KLDMRR) the chain is on the cytoplasmic side. A helical membrane pass occupies residues 336–355 (LVTFSFIMYAVCFYWRAYTF). At 356-363 (EPGMDFGA) the chain is on the extracellular side. The chain crosses the membrane as a helical span at residues 364–387 (SAWPQFIQGFAVACFFMPLTTITL). Topologically, residues 388 to 407 (SGLPPERLAAASSLSNFTRT) are cytoplasmic. The chain crosses the membrane as a helical span at residues 408 to 428 (LAGSIGTSITTTMWTNRESMH). Topologically, residues 429 to 481 (HAQLTESVNPFNPNAQAMYSQLEGLGMTQQQASGWIAQQITNQGLIISANEIF) are extracellular. Residues 482-504 (WMSAGIFLVLLGLVWFAKPPFGA) form a helical membrane-spanning segment. At 505 to 512 (GGGGGGAH) the chain is on the cytoplasmic side.

It belongs to the major facilitator superfamily. EmrB family. Part of the tripartite efflux system EmrAB-TolC, which is composed of an inner membrane transporter, EmrB, a periplasmic membrane fusion protein, EmrA, and an outer membrane component, TolC. The complex forms a large protein conduit and can translocate molecules across both the inner and outer membranes. Interacts with EmrA.

The protein localises to the cell inner membrane. Functionally, part of the tripartite efflux system EmrAB-TolC, which confers resistance to antibiotics. The protein is Multidrug export protein EmrB (emrB) of Escherichia coli O157:H7.